The sequence spans 691 residues: DNA ligase (691 aa).

NAD(+) contacts are provided by residues 36-40 (DAEYD), 85-86 (SL), and Glu-118. Lys-120 functions as the N6-AMP-lysine intermediate in the catalytic mechanism. 4 residues coordinate NAD(+): Arg-141, Glu-178, Lys-295, and Lys-319. Zn(2+) is bound by residues Cys-413, Cys-416, Cys-431, and Cys-437. Residues 595–684 (GRPQPLAGQT…ESASSEDAQP (90 aa)) enclose the BRCT domain.

The protein belongs to the NAD-dependent DNA ligase family. LigA subfamily. It depends on Mg(2+) as a cofactor. Requires Mn(2+) as cofactor.

The catalysed reaction is NAD(+) + (deoxyribonucleotide)n-3'-hydroxyl + 5'-phospho-(deoxyribonucleotide)m = (deoxyribonucleotide)n+m + AMP + beta-nicotinamide D-nucleotide.. Its function is as follows. DNA ligase that catalyzes the formation of phosphodiester linkages between 5'-phosphoryl and 3'-hydroxyl groups in double-stranded DNA using NAD as a coenzyme and as the energy source for the reaction. It is essential for DNA replication and repair of damaged DNA. In Chromohalobacter salexigens (strain ATCC BAA-138 / DSM 3043 / CIP 106854 / NCIMB 13768 / 1H11), this protein is DNA ligase.